Here is a 339-residue protein sequence, read N- to C-terminus: Glycerol-3-phosphate dehydrogenase [NAD(P)+] (339 aa).

NADPH is bound by residues Ser15, Tyr16, His36, and Lys110. Residues Lys110, Gly139, and Thr141 each contribute to the sn-glycerol 3-phosphate site. Ala143 is an NADPH binding site. Lys195, Asp248, Ser258, Arg259, and Asn260 together coordinate sn-glycerol 3-phosphate. Lys195 serves as the catalytic Proton acceptor. Arg259 lines the NADPH pocket. 2 residues coordinate NADPH: Val283 and Glu285.

The protein belongs to the NAD-dependent glycerol-3-phosphate dehydrogenase family.

Its subcellular location is the cytoplasm. The catalysed reaction is sn-glycerol 3-phosphate + NAD(+) = dihydroxyacetone phosphate + NADH + H(+). It carries out the reaction sn-glycerol 3-phosphate + NADP(+) = dihydroxyacetone phosphate + NADPH + H(+). Its pathway is membrane lipid metabolism; glycerophospholipid metabolism. Catalyzes the reduction of the glycolytic intermediate dihydroxyacetone phosphate (DHAP) to sn-glycerol 3-phosphate (G3P), the key precursor for phospholipid synthesis. The polypeptide is Glycerol-3-phosphate dehydrogenase [NAD(P)+] (Enterobacter sp. (strain 638)).